An 84-amino-acid chain; its full sequence is MNYLVMISLALLLMTGVESVRDGYIVDSKNCVYHCVPPCDGLCKKNGAKSGSCGFLIPSGLACWCVALPDNVPIKDPSYKCHSR.

Residues 1-19 form the signal peptide; that stretch reads MNYLVMISLALLLMTGVES. One can recognise an LCN-type CS-alpha/beta domain in the interval 21-82; it reads RDGYIVDSKN…PIKDPSYKCH (62 aa). 4 disulfides stabilise this stretch: C31–C81, C35–C53, C39–C63, and C43–C65. Position 84 (R84) is a propeptide, removed by a carboxypeptidase.

Belongs to the long (4 C-C) scorpion toxin superfamily. Sodium channel inhibitor family. Alpha subfamily. In terms of tissue distribution, expressed by the venom gland.

Its subcellular location is the secreted. Its function is as follows. Alpha toxins bind voltage-independently at site-3 of sodium channels (Nav) and inhibit the inactivation of the activated channels, thereby blocking neuronal transmission. In Androctonus australis (Sahara scorpion), this protein is Alpha-mammal toxin Aah3.